Here is a 270-residue protein sequence, read N- to C-terminus: Urease accessory protein UreD (270 aa).

This sequence belongs to the UreD family. As to quaternary structure, ureD, UreF and UreG form a complex that acts as a GTP-hydrolysis-dependent molecular chaperone, activating the urease apoprotein by helping to assemble the nickel containing metallocenter of UreC. The UreE protein probably delivers the nickel.

The protein resides in the cytoplasm. Its function is as follows. Required for maturation of urease via the functional incorporation of the urease nickel metallocenter. The chain is Urease accessory protein UreD from Klebsiella pneumoniae.